The chain runs to 545 residues: Cannabidiolic acid synthase-like 2 (545 aa).

Positions 1–28 are cleaved as a signal peptide; sequence MKCSTFCFWYVCKIIFFFLSFNIQISIA. Cys-37 and Cys-99 are joined by a disulfide. 4 N-linked (GlcNAc...) asparagine glycosylation sites follow: Asn-45, Asn-65, Asn-89, and Asn-168. The 175-residue stretch at 77–251 folds into the FAD-binding PCMH-type domain; the sequence is TTPKPLVITT…AAWKIRLVAV (175 aa). Residues 114 to 176 constitute a cross-link (6-(S-cysteinyl)-8alpha-(pros-histidyl)-FAD (His-Cys)); sequence HDAEGMSYIS…ENLSFPAGYC (63 aa). His-292 is a binding site for substrate. Residues Asn-297, Asn-305, Asn-329, and Asn-361 are each glycosylated (N-linked (GlcNAc...) asparagine). Tyr-417 is a binding site for substrate. N-linked (GlcNAc...) asparagine glycosylation is present at Asn-467. Residue Tyr-484 is the Proton acceptor of the active site. N-linked (GlcNAc...) asparagine glycosylation is present at Asn-499.

This sequence belongs to the oxygen-dependent FAD-linked oxidoreductase family. Requires FAD as cofactor. Post-translationally, the FAD cofactor is bound via a bicovalent 6-S-cysteinyl, 8alpha-N1-histidyl FAD linkage.

It is found in the secreted. In terms of biological role, has no cannabidiolic acid synthase activity. The sequence is that of Cannabidiolic acid synthase-like 2 (CBDAS3) from Cannabis sativa (Hemp).